The sequence spans 395 residues: ATP phosphoribosyltransferase regulatory subunit (395 aa).

It belongs to the class-II aminoacyl-tRNA synthetase family. HisZ subfamily. In terms of assembly, heteromultimer composed of HisG and HisZ subunits.

The protein localises to the cytoplasm. The protein operates within amino-acid biosynthesis; L-histidine biosynthesis; L-histidine from 5-phospho-alpha-D-ribose 1-diphosphate: step 1/9. Required for the first step of histidine biosynthesis. May allow the feedback regulation of ATP phosphoribosyltransferase activity by histidine. The protein is ATP phosphoribosyltransferase regulatory subunit of Stutzerimonas stutzeri (Pseudomonas stutzeri).